The primary structure comprises 340 residues: Glyceraldehyde-3-phosphate dehydrogenase (340 aa).

NAD(+) contacts are provided by residues 11–12 (TI) and Gly109. 138-140 (SCN) is a D-glyceraldehyde 3-phosphate binding site. The active-site Nucleophile is the Cys139. Arg167 is an NAD(+) binding site. 193–194 (HA) is a binding site for D-glyceraldehyde 3-phosphate. Gln300 provides a ligand contact to NAD(+).

Belongs to the glyceraldehyde-3-phosphate dehydrogenase family. In terms of assembly, homotetramer.

It is found in the cytoplasm. It catalyses the reaction D-glyceraldehyde 3-phosphate + phosphate + NADP(+) = (2R)-3-phospho-glyceroyl phosphate + NADPH + H(+). It carries out the reaction D-glyceraldehyde 3-phosphate + phosphate + NAD(+) = (2R)-3-phospho-glyceroyl phosphate + NADH + H(+). It functions in the pathway carbohydrate degradation; glycolysis; pyruvate from D-glyceraldehyde 3-phosphate: step 1/5. The sequence is that of Glyceraldehyde-3-phosphate dehydrogenase from Saccharolobus islandicus (strain M.14.25 / Kamchatka #1) (Sulfolobus islandicus).